Reading from the N-terminus, the 491-residue chain is G2/mitotic-specific cyclin-A (491 aa).

The disordered stretch occupies residues 1 to 21 (MASFQIHQDMSNKENPGIKIP). One can recognise a Cyclin N-terminal domain in the interval 206–332 (DILEYFRESE…ILKILSFDLC (127 aa)).

It belongs to the cyclin family. Cyclin AB subfamily. As to quaternary structure, component of the Frs-CycA-Cdk1 complex composed of CycA, Cdk1 and Z600. Interacts (via C-terminus) with Z600. Interacts with otu and (via C-terminus) with bam; the interaction stabilizes CycA by negatively regulating its ubiquitination. Post-translationally, ubiquitinated. Ubiquitination state is negatively regulated by a deubiquitinase complex made up of bam and otu.

Functionally, essential for the control of the cell cycle at the G2/M (mitosis) transition. Interacts with the Cdk1 and Cdk2 protein kinases to form MPF. G2/M cyclins accumulate steadily during G2 and are abruptly destroyed at mitosis. In Drosophila melanogaster (Fruit fly), this protein is G2/mitotic-specific cyclin-A (CycA).